The following is a 497-amino-acid chain: Glucose-6-phosphate 1-dehydrogenase (497 aa).

Residues 17-24 (GASGDLAK), Arg-51, and Lys-151 each bind NADP(+). Residues Lys-151, 181 to 185 (HYLGK), Glu-219, and Asp-238 each bind D-glucose 6-phosphate. The Proton acceptor role is filled by His-243. Residue Lys-334 participates in NADP(+) binding. The D-glucose 6-phosphate site is built by Lys-337 and Arg-342. NADP(+) is bound by residues Lys-343, Arg-347, and Arg-371. Gln-373 serves as a coordination point for D-glucose 6-phosphate. NADP(+) is bound by residues 379–381 (YLK), 399–401 (DLS), Arg-465, and Trp-487.

This sequence belongs to the glucose-6-phosphate dehydrogenase family.

The protein localises to the cytoplasm. It is found in the cytosol. The catalysed reaction is D-glucose 6-phosphate + NADP(+) = 6-phospho-D-glucono-1,5-lactone + NADPH + H(+). It participates in carbohydrate degradation; pentose phosphate pathway; D-ribulose 5-phosphate from D-glucose 6-phosphate (oxidative stage): step 1/3. Functionally, cytosolic glucose-6-phosphate dehydrogenase that catalyzes the first and rate-limiting step of the oxidative branch within the pentose phosphate pathway/shunt, an alternative route to glycolysis for the dissimilation of carbohydrates and a major source of reducing power and metabolic intermediates for fatty acid and nucleic acid biosynthetic processes. The protein is Glucose-6-phosphate 1-dehydrogenase (g6pd-1) of Dictyostelium discoideum (Social amoeba).